Here is a 208-residue protein sequence, read N- to C-terminus: 3-demethoxyubiquinol 3-hydroxylase (208 aa).

Fe cation contacts are provided by Glu57, Glu87, His90, Glu139, Glu171, and His174.

It belongs to the COQ7 family. Requires Fe cation as cofactor.

It localises to the cell membrane. It catalyses the reaction a 5-methoxy-2-methyl-3-(all-trans-polyprenyl)benzene-1,4-diol + AH2 + O2 = a 3-demethylubiquinol + A + H2O. Its pathway is cofactor biosynthesis; ubiquinone biosynthesis. Its function is as follows. Catalyzes the hydroxylation of 2-nonaprenyl-3-methyl-6-methoxy-1,4-benzoquinol during ubiquinone biosynthesis. This chain is 3-demethoxyubiquinol 3-hydroxylase, found in Nitrosomonas eutropha (strain DSM 101675 / C91 / Nm57).